A 608-amino-acid polypeptide reads, in one-letter code: Membrane protein insertase YidC (608 aa).

The helical transmembrane segment at 8–28 (LLLATALSFLVILGWYFFFPP) threads the bilayer. Positions 33 to 61 (PQPATEVTETAPQGDTTAPAAAPSAGAAT) are disordered. 5 helical membrane passes run 378–398 (MGVA…PLAY), 448–468 (LPIL…FVTL), 482–502 (LSVP…WAAP), 506–526 (SLLS…SMWV), and 542–562 (IFAW…SGLV).

This sequence belongs to the OXA1/ALB3/YidC family. Type 1 subfamily. Interacts with the Sec translocase complex via SecD. Specifically interacts with transmembrane segments of nascent integral membrane proteins during membrane integration.

It localises to the cell inner membrane. In terms of biological role, required for the insertion and/or proper folding and/or complex formation of integral membrane proteins into the membrane. Involved in integration of membrane proteins that insert both dependently and independently of the Sec translocase complex, as well as at least some lipoproteins. Aids folding of multispanning membrane proteins. This chain is Membrane protein insertase YidC, found in Ruegeria sp. (strain TM1040) (Silicibacter sp.).